We begin with the raw amino-acid sequence, 558 residues long: Serine palmitoyltransferase 1 (558 aa).

At 1-49 (MAHIPEVLPKSIPIPAFIVTTSSYLWYYFNLVLTQIPGGQFIVSYIKKS) the chain is on the lumenal side. Residues 50 to 84 (HHDDPYRTTVEIGLILYGIIYYLSKPQQKKSLQAQ) form a helical membrane-spanning segment. Over 85–341 (KPNLSPQEID…GRGLSEHFNM (257 aa)) the chain is Cytoplasmic. Phosphothreonine is present on T121. Residues 342-371 (DRATAIDITVGSMATALGSTGGFVLGDSVM) traverse the membrane as a helical segment. Residues 372–424 (CLHQRIGSNAYCFSACLPAYTVTSVSKVLKLMDSNNDAVQTLQKLSKSLHDSF) are Lumenal-facing. Residues 425–457 (ASDDSLRSYVIVTSSPVSAVLHLQLTPAYRSRK) traverse the membrane as a helical segment. Over 458-558 (FGYTCEQLFE…ILACCQESNK (101 aa)) the chain is Cytoplasmic.

Belongs to the class-II pyridoxal-phosphate-dependent aminotransferase family. As to quaternary structure, LCB1 and LCB2 encode essential subunits of the enzyme and form a heterodimer. Component of the SPOTS complex, at least composed of LCB1/2 (LCB1 and/or LCB2), ORM1/2 (ORM1 and/or ORM2), SAC1 and TSC3. Interacts with LCB2 and TSC3. Pyridoxal 5'-phosphate is required as a cofactor.

The protein resides in the cytoplasm. It localises to the endoplasmic reticulum membrane. It carries out the reaction L-serine + hexadecanoyl-CoA + H(+) = 3-oxosphinganine + CO2 + CoA. Its pathway is lipid metabolism; sphingolipid metabolism. Component of serine palmitoyltransferase (SPT), which catalyzes the committed step in the synthesis of sphingolipids, the condensation of serine with palmitoyl CoA to form the long chain base 3-ketosphinganine. This Saccharomyces cerevisiae (strain ATCC 204508 / S288c) (Baker's yeast) protein is Serine palmitoyltransferase 1 (LCB1).